Reading from the N-terminus, the 1802-residue chain is Transposon Ty4-H Gag-Pol polyprotein (1802 aa).

Residues 39-115 (RKVSIKDEQV…IQLLETNENN (77 aa)) adopt a coiled-coil conformation. The interval 381 to 501 (NNNLSPVQNE…KTKMVLSRKY (121 aa)) is ty4 protease. Residue Asp414 is the For protease activity; shared with dimeric partner of the active site. Residues 539–599 (AIKPTSSPGF…EPNEFWCQTC (61 aa)) are integrase-type zinc finger-like. Residues 619-786 (TDHEPGSSWC…LPLKAISRQP (168 aa)) form the Integrase catalytic domain. Mg(2+) contacts are provided by Asp630 and Asp695. The tract at residues 1223 to 1248 (KRKRKRHDKNNSLTSYELERDKKRSK) is disordered. The Reverse transcriptase Ty1/copia-type domain maps to 1375-1510 (RNMFMKTLDI…DILGMDLVYN (136 aa)). Mg(2+) is bound by residues Asp1383, Asp1462, Asp1463, Asp1644, Glu1686, and Asp1720. The RNase H Ty1/copia-type domain maps to 1644–1790 (DASVGSEYDA…KRFIQVLKNK (147 aa)).

The protease is a homodimer, whose active site consists of two apposed aspartic acid residues. In terms of processing, proteolytically processed into capsid protein (CA), Ty4 protease (PR), integrase (IN) and reverse transcriptase/ribonuclease H (RT) proteins. Initially, virus-like particles (VLPs) are composed of the structural unprocessed proteins Gag and Gag-Pol, and also contain the host initiator methionine tRNA (tRNA(i)-Met) which serves as a primer for minus-strand DNA synthesis, and a dimer of genomic Ty RNA. Processing of the polyproteins occurs within the particle and proceeds by an ordered pathway, called maturation. First, the protease (PR) is released by autocatalytic cleavage of the Gag-Pol polyprotein, and this cleavage is a prerequisite for subsequent processing at the remaining sites to release the mature structural and catalytic proteins. Maturation takes place prior to the RT reaction and is required to produce transposition-competent VLPs.

The protein localises to the cytoplasm. It localises to the nucleus. The catalysed reaction is DNA(n) + a 2'-deoxyribonucleoside 5'-triphosphate = DNA(n+1) + diphosphate. It catalyses the reaction Endonucleolytic cleavage to 5'-phosphomonoester.. Functionally, capsid protein (CA) is the structural component of the virus-like particle (VLP), forming the shell that encapsulates the retrotransposons dimeric RNA genome. Its function is as follows. The aspartyl protease (PR) mediates the proteolytic cleavages of the Gag and Gag-Pol polyproteins after assembly of the VLP. Reverse transcriptase/ribonuclease H (RT) is a multifunctional enzyme that catalyzes the conversion of the retro-elements RNA genome into dsDNA within the VLP. The enzyme displays a DNA polymerase activity that can copy either DNA or RNA templates, and a ribonuclease H (RNase H) activity that cleaves the RNA strand of RNA-DNA heteroduplexes during plus-strand synthesis and hydrolyzes RNA primers. The conversion leads to a linear dsDNA copy of the retrotransposon that includes long terminal repeats (LTRs) at both ends. In terms of biological role, integrase (IN) targets the VLP to the nucleus, where a subparticle preintegration complex (PIC) containing at least integrase and the newly synthesized dsDNA copy of the retrotransposon must transit the nuclear membrane. Once in the nucleus, integrase performs the integration of the dsDNA into the host genome. The polypeptide is Transposon Ty4-H Gag-Pol polyprotein (TY4B-H) (Saccharomyces cerevisiae (strain ATCC 204508 / S288c) (Baker's yeast)).